The chain runs to 103 residues: BLOC-1-related complex subunit 7 (103 aa).

Belongs to the BORCS7 family.

It localises to the lysosome membrane. In terms of biological role, as part of a BORC-like complex may play a role in lysosomes movement and localization at the cell periphery. Associated with the cytosolic face of lysosomes, this complex may couple lysosomes to microtubule plus-end-directed kinesin motor. The chain is BLOC-1-related complex subunit 7 from Danio rerio (Zebrafish).